The chain runs to 571 residues: Proline--tRNA ligase (571 aa).

It belongs to the class-II aminoacyl-tRNA synthetase family. ProS type 1 subfamily. As to quaternary structure, homodimer.

The protein localises to the cytoplasm. It catalyses the reaction tRNA(Pro) + L-proline + ATP = L-prolyl-tRNA(Pro) + AMP + diphosphate. Its function is as follows. Catalyzes the attachment of proline to tRNA(Pro) in a two-step reaction: proline is first activated by ATP to form Pro-AMP and then transferred to the acceptor end of tRNA(Pro). As ProRS can inadvertently accommodate and process non-cognate amino acids such as alanine and cysteine, to avoid such errors it has two additional distinct editing activities against alanine. One activity is designated as 'pretransfer' editing and involves the tRNA(Pro)-independent hydrolysis of activated Ala-AMP. The other activity is designated 'posttransfer' editing and involves deacylation of mischarged Ala-tRNA(Pro). The misacylated Cys-tRNA(Pro) is not edited by ProRS. This chain is Proline--tRNA ligase, found in Pseudomonas putida (strain ATCC 700007 / DSM 6899 / JCM 31910 / BCRC 17059 / LMG 24140 / F1).